The following is a 133-amino-acid chain: Brain natriuretic peptide (133 aa).

The N-terminal stretch at 1–22 is a signal peptide; the sequence is MVVSFVSICGLLLIFNLPLSTS. Positions 44 to 53 are enriched in acidic residues; the sequence is SMSEETEEDQ. 2 disordered regions span residues 44-76 and 93-112; these read SMSE…NRDQ and TRKN…FGRR. An intrachain disulfide couples C108 to C124.

Belongs to the natriuretic peptide family.

It is found in the secreted. Its function is as follows. Cardiac hormone which may function as a paracrine antifibrotic factor in the heart. Also plays a key role in cardiovascular homeostasis through natriuresis, diuresis, vasorelaxation, and inhibition of renin and aldosterone secretion. Has a cGMP-stimulating activity. The sequence is that of Brain natriuretic peptide (nppb) from Takifugu rubripes (Japanese pufferfish).